We begin with the raw amino-acid sequence, 118 residues long: uncharacterized protein (118 aa).

It to M.jannaschii MJ0310 and MJ1340.

This is an uncharacterized protein from Methanocaldococcus jannaschii (strain ATCC 43067 / DSM 2661 / JAL-1 / JCM 10045 / NBRC 100440) (Methanococcus jannaschii).